Here is a 554-residue protein sequence, read N- to C-terminus: Probable ATP-binding cassette sub-family F member 3 homolog (554 aa).

ABC transporter domains lie at Gly89 to Arg285 and Ile351 to Val554. Residues Gly122–Thr129 and Gly383–Ser390 contribute to the ATP site.

The protein belongs to the ABC transporter superfamily. ABCF family. EF3 subfamily.

In Encephalitozoon cuniculi (strain GB-M1) (Microsporidian parasite), this protein is Probable ATP-binding cassette sub-family F member 3 homolog.